The primary structure comprises 200 residues: Pyridoxal 5'-phosphate synthase subunit PdxT (200 aa).

50 to 52 (GES) lines the L-glutamine pocket. The active-site Nucleophile is cysteine 82. L-glutamine-binding positions include arginine 110 and 138–139 (IR). Active-site charge relay system residues include histidine 174 and glutamate 176.

Belongs to the glutaminase PdxT/SNO family. In terms of assembly, in the presence of PdxS, forms a dodecamer of heterodimers. Only shows activity in the heterodimer.

It carries out the reaction aldehydo-D-ribose 5-phosphate + D-glyceraldehyde 3-phosphate + L-glutamine = pyridoxal 5'-phosphate + L-glutamate + phosphate + 3 H2O + H(+). The enzyme catalyses L-glutamine + H2O = L-glutamate + NH4(+). Its pathway is cofactor biosynthesis; pyridoxal 5'-phosphate biosynthesis. Functionally, catalyzes the hydrolysis of glutamine to glutamate and ammonia as part of the biosynthesis of pyridoxal 5'-phosphate. The resulting ammonia molecule is channeled to the active site of PdxS. The chain is Pyridoxal 5'-phosphate synthase subunit PdxT from Oceanobacillus iheyensis (strain DSM 14371 / CIP 107618 / JCM 11309 / KCTC 3954 / HTE831).